A 192-amino-acid polypeptide reads, in one-letter code: VQ motif-containing protein 22 (192 aa).

Positions 24–38 are enriched in low complexity; the sequence is ASTAVTTTTAGDTTS. Residues 24-65 are disordered; that stretch reads ASTAVTTTTAGDTTSIDSRLSPETGRVTKPTRRRSRASRRTP. Positions 52-62 are enriched in basic residues; that stretch reads KPTRRRSRASR. Residues 76–85 carry the VQ motif; that stretch reads FRAMVQQYTG. 2 disordered regions span residues 101-135 and 163-192; these read FSLTSSSDPSAGSSQQAPWQYNFQPHAPLQPPQRP and FGTVDGSGGGGSAPSSKEATNSNSSSSRLQ. 2 stretches are compositionally biased toward low complexity: residues 102–114 and 175–192; these read SLTSSSDPSAGSS and APSSKEATNSNSSSSRLQ.

Its subcellular location is the nucleus. Its function is as follows. May function as positive regulator of plant growth. In Arabidopsis thaliana (Mouse-ear cress), this protein is VQ motif-containing protein 22.